Consider the following 125-residue polypeptide: Large ribosomal subunit protein bL12 (125 aa).

The protein belongs to the bacterial ribosomal protein bL12 family. Homodimer. Part of the ribosomal stalk of the 50S ribosomal subunit. Forms a multimeric L10(L12)X complex, where L10 forms an elongated spine to which 2 to 4 L12 dimers bind in a sequential fashion. Binds GTP-bound translation factors.

Its function is as follows. Forms part of the ribosomal stalk which helps the ribosome interact with GTP-bound translation factors. Is thus essential for accurate translation. This is Large ribosomal subunit protein bL12 from Mannheimia succiniciproducens (strain KCTC 0769BP / MBEL55E).